A 96-amino-acid chain; its full sequence is Cytochrome b (96 aa).

The next 3 membrane-spanning stretches (helical) occupy residues 1-15, 39-60, and 75-95; these read LCXI…FLAM, WLIR…YLHI, and WNVG…GYVL. 2 residues coordinate heme b: His-45 and His-59.

It belongs to the cytochrome b family. The cytochrome bc1 complex contains 3 respiratory subunits (MT-CYB, CYC1 and UQCRFS1), 2 core proteins (UQCRC1 and UQCRC2) and probably 6 low-molecular weight proteins. Heme b serves as cofactor.

Its subcellular location is the mitochondrion inner membrane. Functionally, component of the ubiquinol-cytochrome c reductase complex (complex III or cytochrome b-c1 complex) that is part of the mitochondrial respiratory chain. The b-c1 complex mediates electron transfer from ubiquinol to cytochrome c. Contributes to the generation of a proton gradient across the mitochondrial membrane that is then used for ATP synthesis. The protein is Cytochrome b (mt-cyb) of Geophagus steindachneri (Red hump earth eater).